A 124-amino-acid polypeptide reads, in one-letter code: Small ribosomal subunit protein bS16 (124 aa).

Residues 88 to 124 form a disordered region; it reads VPEQTKQAQPKAKAQERLREAEEKARAAAEAAASAEG. A compositionally biased stretch (basic and acidic residues) spans 100-114; the sequence is KAQERLREAEEKARA. The segment covering 115–124 has biased composition (low complexity); that stretch reads AAEAAASAEG.

It belongs to the bacterial ribosomal protein bS16 family.

The chain is Small ribosomal subunit protein bS16 from Rhodospirillum rubrum (strain ATCC 11170 / ATH 1.1.1 / DSM 467 / LMG 4362 / NCIMB 8255 / S1).